The primary structure comprises 251 residues: Carbohydrate deacetylase (251 aa).

Residues His-59 and His-122 each contribute to the Mg(2+) site.

This sequence belongs to the YdjC deacetylase family. As to quaternary structure, homodimer. Mg(2+) is required as a cofactor.

Its function is as follows. Probably catalyzes the deacetylation of acetylated carbohydrates an important step in the degradation of oligosaccharides. This is Carbohydrate deacetylase from Vibrio parahaemolyticus serotype O3:K6 (strain RIMD 2210633).